A 345-amino-acid chain; its full sequence is Quinolinate synthase (345 aa).

2 residues coordinate iminosuccinate: histidine 69 and serine 87. Residue cysteine 132 participates in [4Fe-4S] cluster binding. Residues 158–160 and serine 175 contribute to the iminosuccinate site; that span reads YVN. [4Fe-4S] cluster is bound at residue cysteine 217. Iminosuccinate contacts are provided by residues 243-245 and threonine 260; that span reads HPE. A [4Fe-4S] cluster-binding site is contributed by cysteine 303.

This sequence belongs to the quinolinate synthase family. Type 2 subfamily. [4Fe-4S] cluster is required as a cofactor.

The protein resides in the cytoplasm. The catalysed reaction is iminosuccinate + dihydroxyacetone phosphate = quinolinate + phosphate + 2 H2O + H(+). It participates in cofactor biosynthesis; NAD(+) biosynthesis; quinolinate from iminoaspartate: step 1/1. Functionally, catalyzes the condensation of iminoaspartate with dihydroxyacetone phosphate to form quinolinate. The chain is Quinolinate synthase from Agrobacterium fabrum (strain C58 / ATCC 33970) (Agrobacterium tumefaciens (strain C58)).